We begin with the raw amino-acid sequence, 624 residues long: LRR receptor kinase BAK1 (624 aa).

Positions 1-25 (MAAHRWAVWAVLLLRLLVPAARVLA) are cleaved as a signal peptide. Residues 26–237 (NMEGDALHSL…QSPGSSSSTG (212 aa)) lie on the Extracellular side of the membrane. 4 LRR repeats span residues 91-115 (LKNL…LGNL), 117-139 (NLVS…LGNL), 140-163 (LKLR…LTAI), and 164-188 (TALQ…SFSL). N-linked (GlcNAc...) asparagine glycosylation is found at N103, N114, N127, N149, and N175. A disordered region spans residues 205-236 (TTKPCPGAPPFSPPPPYNPPTPVQSPGSSSST). Residues 210 to 227 (PGAPPFSPPPPYNPPTPV) show a composition bias toward pro residues. Residues 238–258 (AIAGGVAAGAALLFAIPAIGF) form a helical membrane-spanning segment. The Cytoplasmic portion of the chain corresponds to 259–624 (AWYRRRKPQE…LHAVELSGPR (366 aa)). The region spanning 301-588 (FSNKNILGRG…GLAERWEEWQ (288 aa)) is the Protein kinase domain. ATP-binding positions include 307 to 315 (LGRGGFGKV) and K329. The Proton acceptor role is filled by D428.

The protein belongs to the protein kinase superfamily. Ser/Thr protein kinase family. As to quaternary structure, forms homodimers. Interacts with BRI1. Interacts with REM4.1. Expressed in developing lateral roots, shoot apex, leaf blades, lamina joints and flowers. Expressed at low levels in leaf sheaths and panicles.

The protein resides in the cell membrane. The enzyme catalyses L-seryl-[protein] + ATP = O-phospho-L-seryl-[protein] + ADP + H(+). The catalysed reaction is L-threonyl-[protein] + ATP = O-phospho-L-threonyl-[protein] + ADP + H(+). Functionally, LRR receptor kinase involved in defense response. Does not seem to be required specifically for XA21-mediated immunity or basal resistance to Xanthomonas oryzae pv. oryzae (Xoo), or immunity to Magnaporthe oryzae. Involved in brassinosteroid (BR) signaling pathway. Acts as a coreceptor of BRI1. Forms at the plasma membrane a receptor complex with BRI1 which is activated in response to brassinolide. Phosphorylates BRI1. Required for normal plant growth and leaf development. Possesses kinase activity in vitro. This chain is LRR receptor kinase BAK1, found in Oryza sativa subsp. japonica (Rice).